The following is a 492-amino-acid chain: GTPase Der (492 aa).

2 consecutive EngA-type G domains span residues 3 to 167 (FTLA…EKFE) and 207 to 382 (LQVA…DVWN). GTP is bound by residues 9–16 (GRPNVGKS), 56–60 (DSAGL), 119–122 (NKSE), 213–220 (GRPNAGKS), 260–264 (DTAGM), and 325–328 (NKWD). The KH-like domain occupies 383–469 (RRVPTAALNR…RLTLRGQGDK (87 aa)). The tract at residues 461-492 (LTLRGQGDKNPYKGKKKSTPSRLRKHLEGRKS) is disordered. Over residues 472–492 (YKGKKKSTPSRLRKHLEGRKS) the composition is skewed to basic residues.

This sequence belongs to the TRAFAC class TrmE-Era-EngA-EngB-Septin-like GTPase superfamily. EngA (Der) GTPase family. In terms of assembly, associates with the 50S ribosomal subunit.

Its function is as follows. GTPase that plays an essential role in the late steps of ribosome biogenesis. The polypeptide is GTPase Der (Ruegeria sp. (strain TM1040) (Silicibacter sp.)).